Reading from the N-terminus, the 230-residue chain is Lecithin retinol acyltransferase (230 aa).

At 1 to 194 (MKNPMLEVVS…VKIIIRDQRS (194 aa)) the chain is on the cytoplasmic side. The 128-residue stretch at 50 to 177 (VLEVPRTHLT…CRYGTPISPQ (128 aa)) folds into the LRAT domain. Catalysis depends on residues His-60 and His-72. Catalysis depends on Cys-161, which acts as the Acyl-thioester intermediate. Residues 195 to 215 (VLASAVLGLASIVCTGLVSYT) form a helical membrane-spanning segment. Over 216 to 230 (TLPAIFIPFFLWMAG) the chain is Lumenal.

This sequence belongs to the H-rev107 family. In terms of tissue distribution, hepatic stellate cells and endothelial cells (at protein level). Found at high levels in testis and liver, followed by retinal pigment epithelium, small intestine, prostate, pancreas and colon. Low expression observed in brain. In fetal tissues, expressed in retinal pigment epithelium and liver, and barely in the brain.

It is found in the endoplasmic reticulum membrane. The protein resides in the rough endoplasmic reticulum. It localises to the endosome. The protein localises to the multivesicular body. Its subcellular location is the cytoplasm. It is found in the perinuclear region. The catalysed reaction is all-trans-retinol--[retinol-binding protein] + a 1,2-diacyl-sn-glycero-3-phosphocholine = apo--[retinol-binding protein] + an all-trans-retinyl ester + a 2-acyl-sn-glycero-3-phosphocholine. It carries out the reaction 1,2-dihexadecanoyl-sn-glycero-3-phosphocholine + all-trans-retinol = all-trans-retinyl hexadecanoate + 2-hexadecanoyl-sn-glycero-3-phosphocholine. It catalyses the reaction 1,2-diheptanoyl-sn-glycero-3-phosphocholine + all-trans-retinol--[retinol-binding protein] = all-trans-retinyl heptanoate + 2-heptanoyl-sn-glycero-3-phosphocholine + apo--[retinol-binding protein]. The enzyme catalyses 1,2-dioctanoyl-sn-glycero-3-phosphocholine + all-trans-retinol--[retinol-binding protein] = 2-octanoyl-sn-glycero-3-phosphocholine + all-trans-retinyl octanoate + apo--[retinol-binding protein]. The catalysed reaction is all-trans-retinol--[retinol-binding protein] + 1,2-dihexadecanoyl-sn-glycero-3-phosphocholine = apo--[retinol-binding protein] + all-trans-retinyl hexadecanoate + 2-hexadecanoyl-sn-glycero-3-phosphocholine. It carries out the reaction 1,2-didodecanoyl-sn-glycero-3-phosphocholine + all-trans-retinol--[retinol-binding protein] = 2-dodecanoyl-sn-glycero-3-phosphocholine + all-trans-retinyl dodecanoate + apo--[retinol-binding protein]. Its pathway is cofactor metabolism; retinol metabolism. Its activity is regulated as follows. Inhibited by all-trans-retinyl alpha-bromoacetate and N-boc-L-biocytinyl-11-aminoundecane chloro-methyl ketone (BACMK). Functionally, transfers the acyl group from the sn-1 position of phosphatidylcholine to all-trans retinol, producing all-trans retinyl esters. Retinyl esters are storage forms of vitamin A. LRAT plays a critical role in vision. It provides the all-trans retinyl ester substrates for the isomerohydrolase which processes the esters into 11-cis-retinol in the retinal pigment epithelium; due to a membrane-associated alcohol dehydrogenase, 11 cis-retinol is oxidized and converted into 11-cis-retinaldehyde which is the chromophore for rhodopsin and the cone photopigments. Required for the survival of cone photoreceptors and correct rod photoreceptor cell morphology. The sequence is that of Lecithin retinol acyltransferase from Homo sapiens (Human).